The chain runs to 418 residues: 3-phosphoshikimate 1-carboxyvinyltransferase (418 aa).

3-phosphoshikimate-binding residues include lysine 26, serine 27, and arginine 31. Lysine 26 contributes to the phosphoenolpyruvate binding site. The phosphoenolpyruvate site is built by glycine 97 and arginine 125. 3-phosphoshikimate-binding residues include serine 170, serine 171, glutamine 172, aspartate 297, asparagine 320, and lysine 324. Residue glutamine 172 participates in phosphoenolpyruvate binding. The Proton acceptor role is filled by aspartate 297. 3 residues coordinate phosphoenolpyruvate: arginine 328, arginine 375, and lysine 400.

This sequence belongs to the EPSP synthase family. Monomer.

The protein resides in the cytoplasm. The catalysed reaction is 3-phosphoshikimate + phosphoenolpyruvate = 5-O-(1-carboxyvinyl)-3-phosphoshikimate + phosphate. The protein operates within metabolic intermediate biosynthesis; chorismate biosynthesis; chorismate from D-erythrose 4-phosphate and phosphoenolpyruvate: step 6/7. Catalyzes the transfer of the enolpyruvyl moiety of phosphoenolpyruvate (PEP) to the 5-hydroxyl of shikimate-3-phosphate (S3P) to produce enolpyruvyl shikimate-3-phosphate and inorganic phosphate. In Pseudomonas syringae pv. syringae (strain B728a), this protein is 3-phosphoshikimate 1-carboxyvinyltransferase.